A 345-amino-acid chain; its full sequence is Anthranilate phosphoribosyltransferase (345 aa).

5-phospho-alpha-D-ribose 1-diphosphate-binding positions include glycine 86, 89–90 (GD), threonine 94, 96–99 (NIST), 114–122 (KHGNRNLSS), and alanine 126. Glycine 86 provides a ligand contact to anthranilate. Residue serine 98 coordinates Mg(2+). Asparagine 117 contributes to the anthranilate binding site. Residue arginine 172 coordinates anthranilate. The Mg(2+) site is built by aspartate 231 and glutamate 232.

The protein belongs to the anthranilate phosphoribosyltransferase family. As to quaternary structure, homodimer. The cofactor is Mg(2+).

It catalyses the reaction N-(5-phospho-beta-D-ribosyl)anthranilate + diphosphate = 5-phospho-alpha-D-ribose 1-diphosphate + anthranilate. Its pathway is amino-acid biosynthesis; L-tryptophan biosynthesis; L-tryptophan from chorismate: step 2/5. Catalyzes the transfer of the phosphoribosyl group of 5-phosphorylribose-1-pyrophosphate (PRPP) to anthranilate to yield N-(5'-phosphoribosyl)-anthranilate (PRA). The protein is Anthranilate phosphoribosyltransferase of Jannaschia sp. (strain CCS1).